The following is a 496-amino-acid chain: Flotillin-like protein 3 (496 aa).

The S-palmitoyl cysteine moiety is linked to residue C37. Positions 301 to 328 (VVREAELQLEVERKNALRLTEKLKAEKL) form a coiled coil.

Belongs to the band 7/mec-2 family. Flotillin subfamily. In terms of processing, may be palmitoylated.

It is found in the cell membrane. The protein resides in the membrane. It localises to the caveola. In terms of biological role, may act as a scaffolding protein within caveolar membranes, functionally participating in formation of caveolae or caveolae-like vesicles. This chain is Flotillin-like protein 3 (FLOT3), found in Oryza sativa subsp. japonica (Rice).